The chain runs to 1254 residues: Structural polyprotein (1254 aa).

Residues 1-33 (MFPYQPMYPMQPMPFRNPFAAPRRPWFPRTDPF) are necessary for nucleocapsid assembly and virus assembly. The tract at residues 33–68 (FLAMQVQELARSMANLTFKQRRDVPPEGPPAKKKKK) is host transcription inhibition. A Supraphysiological nuclear export signal motif is present at residues 41 to 48 (LARSMANL). The interval 48 to 119 (LTFKQRRDVP…KPGKRQRMVM (72 aa)) is disordered. The Nuclear localization signal signature appears at 64-68 (KKKKK). Composition is skewed to basic residues over residues 79–93 (NGKK…KKKT) and 102–117 (GGKK…RQRM). The interval 91–126 (KKTGPPPQKTNGGKKKVNKKPGKRQRMVMKLESDKT) is binding to the viral RNA. At Thr-93 the chain carries Phosphothreonine. Residues 111–125 (PGKRQRMVMKLESDK) are ribosome-binding. Phosphoserine is present on Ser-123. Positions 125–274 (KTFPIMLDGR…KYTPENSEQW (150 aa)) constitute a Peptidase S3 domain. A Phosphothreonine modification is found at Thr-126. Catalysis depends on His-151, which acts as the Charge relay system. Residues 167–172 (KKASKY) form an interaction with spike glycoprotein E2 region. Catalysis depends on charge relay system residues Asp-173 and Ser-225. The interval 259–263 (EKGVT) is interaction with spike glycoprotein E2. The segment at 275–286 (SLVTTMCLLANV) is functions as an uncleaved signal peptide for the precursor of protein E3/E2. Residues 275–700 (SLVTTMCLLA…HYYHRYPMST (426 aa)) are Extracellular-facing. Intrachain disulfides connect Cys-281/Cys-290, Cys-352/Cys-456, Cys-355/Cys-360, Cys-423/Cys-437, Cys-484/Cys-599, Cys-533/Cys-559, and Cys-535/Cys-553. Asn-285 is a glycosylation site (N-linked (GlcNAc...) asparagine; by host). An N-linked (GlcNAc...) asparagine; by host glycan is attached at Asn-651. A helical membrane pass occupies residues 701-721 (ILGLSICAAIVTTSIAASVWL). Topologically, residues 722-756 (FCKSRISCLTPYRLTPNARMPLCLAVLCCARTARA) are cytoplasmic. Positions 724-728 (KSRIS) are interaction with the capsid protein. S-palmitoyl cysteine; by host attachment occurs at residues Cys-729, Cys-749, and Cys-750. The transient transmembrane before p62-6K protein processing stretch occupies residues 729 to 749 (CLTPYRLTPNARMPLCLAVLC). A disulfide bridge connects residues Cys-729 and Cys-750. Over 757-771 (ETTWESLDHLWNHNQ) the chain is Extracellular. A run of 2 helical transmembrane segments spans residues 772–790 (QMFW…VATR) and 791–811 (LLKC…VGAG). The Extracellular portion of the chain corresponds to 812–1224 (AYEHATTMPN…SKTAWTWLTS (413 aa)). 4 disulfides stabilise this stretch: Cys-861-Cys-926, Cys-874-Cys-906, Cys-875-Cys-908, and Cys-880-Cys-890. The interval 896 to 913 (VYPFMWGGAYCFCDTENT) is E1 fusion peptide loop. 2 N-linked (GlcNAc...) asparagine; by host glycosylation sites follow: Asn-946 and Asn-1082. Cystine bridges form between Cys-1071–Cys-1083, Cys-1113–Cys-1188, Cys-1118–Cys-1192, and Cys-1140–Cys-1182. A helical membrane pass occupies residues 1225–1245 (LLGGSAIIIIIGLVLATIVAM). Topologically, residues 1246–1254 (YVLTNQKHN) are cytoplasmic.

In terms of assembly, homodimer. Homomultimer. Interacts with host karyopherin KPNA4; this interaction allows the nuclear import of the viral capsid protein. Interacts with spike glycoprotein E2. Interacts with host IRAK1; the interaction leads to inhibition of IRAK1-dependent signaling. Part of a tetrameric complex composed of host CRM1, host importin alpha/beta dimer and the viral capsid; this complex blocks the receptor-mediated transport through the nuclear pore. Interacts with host phosphatase PPP1CA; this interaction dephosphorylates the capsid protein, which increases its ability to bind to the viral genome. As to quaternary structure, the precursor of protein E3/E2 and E1 form a heterodimer shortly after synthesis. Interacts with spike glycoprotein E2. The precursor of protein E3/E2 and E1 form a heterodimer shortly after synthesis. Processing of the precursor of protein E3/E2 into E2 and E3 results in a heterodimer of the spike glycoproteins E2 and E1. Spike at virion surface are constituted of three E2-E1 heterodimers. After target cell attachment and endocytosis, E1 change conformation to form homotrimers. Interacts with 6K protein. Interacts with host LDLRAD3; this interaction mediates viral entry to the host cell. In terms of assembly, interacts with spike glycoprotein E1. Processing of the precursor of protein E3/E2 into E2 and E3 results in a heterodimer of the spike glycoproteins E2 and E1. Spike at virion surface are constituted of a trimer of E2-E1 heterodimers. Interacts with 6K protein. Interacts with host LDLRAD3; this interaction mediates viral entry to the host cell. As to quaternary structure, oligomer. Interacts with spike glycoprotein E1. Interacts with spike glycoprotein E2. In terms of processing, structural polyprotein: Specific enzymatic cleavages in vivo yield mature proteins. Capsid protein is auto-cleaved during polyprotein translation, unmasking a signal peptide at the N-terminus of the precursor of E3/E2. The remaining polyprotein is then targeted to the host endoplasmic reticulum, where host signal peptidase cleaves it into pE2, 6K and E1 proteins. pE2 is further processed to mature E3 and E2 by host furin in trans-Golgi vesicle. Phosphorylated on serine and threonine residues. Post-translationally, palmitoylated via thioester bonds. These palmitoylations may induce disruption of the C-terminus transmembrane. This would result in the reorientation of E2 C-terminus from lumenal to cytoplasmic side. In terms of processing, N-glycosylated. Palmitoylated via thioester bonds.

The protein resides in the virion. It localises to the host cytoplasm. The protein localises to the host cell membrane. Its subcellular location is the host nucleus. It is found in the virion membrane. The protein resides in the host Golgi apparatus. It localises to the host trans-Golgi network. The protein localises to the host endoplasmic reticulum. The enzyme catalyses Autocatalytic release of the core protein from the N-terminus of the togavirus structural polyprotein by hydrolysis of a -Trp-|-Ser- bond.. Forms an icosahedral capsid with a T=4 symmetry composed of 240 copies of the capsid protein surrounded by a lipid membrane through which penetrate 80 spikes composed of trimers of E1-E2 heterodimers. The capsid protein binds to the viral RNA genome at a site adjacent to a ribosome binding site for viral genome translation following genome release. Possesses a protease activity that results in its autocatalytic cleavage from the nascent structural protein. Following its self-cleavage, the capsid protein transiently associates with ribosomes, and within several minutes the protein binds to viral RNA and rapidly assembles into icosahedric core particles. The resulting nucleocapsid eventually associates with the cytoplasmic domain of the spike glycoprotein E2 at the cell membrane, leading to budding and formation of mature virions. In case of infection, new virions attach to target cells and after clathrin-mediated endocytosis their membrane fuses with the host endosomal membrane. This leads to the release of the nucleocapsid into the cytoplasm, followed by an uncoating event necessary for the genomic RNA to become accessible. The uncoating might be triggered by the interaction of capsid proteins with ribosomes. Binding of ribosomes would release the genomic RNA since the same region is genomic RNA-binding and ribosome-binding. Specifically inhibits interleukin-1 receptor-associated kinase 1/IRAK1-dependent signaling during viral entry, representing a means by which the alphaviruses may evade innate immune detection and activation prior to viral gene expression. Inhibits host transcription. Forms a tetrameric complex with XPO1/CRM1 and the nuclear import receptor importin. This complex blocks the central channel of host nuclear pores thereby inhibiting the receptor-mediated nuclear transport and thus the host mRNA and rRNA transcription. The inhibition of transcription is linked to a cytopathic effect on the host cell. Functionally, provides the signal sequence for the translocation of the precursor of protein E3/E2 to the host endoplasmic reticulum. Furin-cleaved E3 remains associated with spike glycoprotein E1 and mediates pH protection of the latter during the transport via the secretory pathway. After virion release from the host cell, the assembly protein E3 is gradually released in the extracellular space. Its function is as follows. Plays a role in viral attachment to target host cell, by binding to the cell receptor LDLRAD3. Synthesized as a p62 precursor which is processed by furin at the cell membrane just before virion budding, giving rise to E2-E1 heterodimer. The p62-E1 heterodimer is stable, whereas E2-E1 is unstable and dissociate at low pH. p62 is processed at the last step, presumably to avoid E1 fusion activation before its final export to cell surface. E2 C-terminus contains a transitory transmembrane that would be disrupted by palmitoylation, resulting in reorientation of the C-terminal tail from lumenal to cytoplasmic side. This step is critical since E2 C-terminus is involved in budding by interacting with capsid proteins. This release of E2 C-terminus in cytoplasm occurs lately in protein export, and precludes premature assembly of particles at the endoplasmic reticulum membrane. In terms of biological role, acts as a viroporin that participates in virus glycoprotein processing and transport to the plasma membrane, cell permeabilization and budding of viral particles. Disrupts the calcium homeostasis of the cell, probably at the endoplasmic reticulum level. This leads to cytoplasmic calcium elevation. Because of its lipophilic properties, the 6K protein is postulated to influence the selection of lipids that interact with the transmembrane domains of the glycoproteins, which, in turn, affects the deformability of the bilayer required for the extreme curvature that occurs as budding proceeds. Present in low amount in virions, about 3% compared to viral glycoproteins. Class II viral fusion protein. Fusion activity is inactive as long as E1 is bound to E2 in mature virion. After virus attachment to cell receptor LDLRAD3 and endocytosis, acidification of the endosome induce dissociation of E1/E2 heterodimer and concomitant trimerization of the E1 subunits. This E1 trimer is fusion active, and promotes release of viral nucleocapsid in cytoplasm after endosome and viral membrane fusion. Efficient fusion requires the presence of cholesterol and sphingolipid in the target membrane. This is Structural polyprotein from Venezuelan equine encephalitis virus (strain Mena II) (VEEV).